Reading from the N-terminus, the 89-residue chain is ATP synthase subunit e, mitochondrial (89 aa).

S1 carries the N-acetylserine modification. The chain crosses the membrane as a helical span at residues 8-25 (YSSLAAGIVYGAYHTYTL).

As to quaternary structure, F-type ATP synthases have 2 components, the catalytic core F(1) and the membrane-embedded component F(0), linked together by a central stalk and a peripheral stalk. The central stalk, also called rotor shaft, is often seen as part of F(1). The peripheral stalk is seen as part of F(0). F(0) contains the membrane channel next to the rotor. F-type ATP synthases form dimers but each monomer functions independently in ATP generation. The dimer consists of 18 different polypeptides: ATP1 (subunit alpha, part of F(1), 3 molecules per monomer), ATP2 (subunit beta, part of F(1), 3 molecules per monomer), ATP3 (subunit gamma, part of the central stalk), ATP4 (subunit b, part of the peripheral stalk), ATP5/OSCP (subunit 5/OSCP, part of the peripheral stalk), ATP6 (subunit a, part of the peripheral stalk), ATP7 (subunit d, part of the peripheral stalk), ATP8 (subunit 8, part of the peripheral stalk), OLI1 (subunit c, part of the rotor, 10 molecules per monomer), ATP14 (subunit h, part of the peripheral stalk), ATP15 (subunit epsilon, part of the central stalk), ATP16 (subunit delta, part of the central stalk), ATP17 (subunit f, part of the peripheral stalk), ATP18 (subunit i/j, part of the peripheral stalk). Dimer-specific subunits are ATP19 (subunit k, at interface between monomers), ATP20 (subunit g, at interface between monomers), TIM11 (subunit e, at interface between monomers). Also contains subunit L.

It is found in the mitochondrion inner membrane. Functionally, mitochondrial membrane ATP synthase (F(1)F(0) ATP synthase or Complex V) produces ATP from ADP in the presence of a proton gradient across the membrane which is generated by electron transport complexes of the respiratory chain. F-type ATP synthases consist of two structural domains, F(1) - containing the extramembraneous catalytic core, and F(0) - containing the membrane proton channel, linked together by a central stalk and a peripheral stalk. During catalysis, ATP synthesis in the catalytic domain of F(1) is coupled via a rotary mechanism of the central stalk subunits to proton translocation. Part of the complex F(0) domain. Minor subunit located with subunit a/ATP6 in the membrane. Together with subunit g/ATP20, probably contributes to membrane curvature at the site of the ATP synthase dimer, ultimately contributing to formation of cristae. This chain is ATP synthase subunit e, mitochondrial, found in Pichia angusta (Yeast).